Consider the following 491-residue polypeptide: MDTAPDHREPQEQGESRKWYEMTASEFYVYVVAFMCGVSMMMSVNAVFSAPAYIMTYYRYAMQDPEAVPLYTNFWNNVMTYYNLIGIVTSLIMEPLTLLSWFRRIPIKVRLLGGLVILIVEIIVLMVVPARGTSEAGAVATICCTGFIGGFGKSIFESTAYGMFGAFPSSFTSTMMGGVGMSGVLTSLLQIIVKAALPDSYEGVKKQSKIYYGLDVGIQGMTFVALILLRFNSFAQNYFGDLGAVKSKVDAGKLSAEALCHTDEHPTHDKEGRNSSSGKEVPALGEVQTAAAKSEGPDAVEESSWPHEVEGPTSNEILVATAIFSTLRRVKWMFVACAFNFLITLFLFPGIAVGMFPDSKWFSTIAVFIFNVFDVLGRFSPSLKLMWPRSYKQRWIIVAASFARVIFVPLLLLHSYHYIPGEAYGYVMEVIFGFSNGYVGSMALVLGPQSKGIDNDGKRFVAGTLMGISILVGGTIGTVLSIMTQTIRERH.

A run of 6 helical transmembrane segments spans residues 27-47 (FYVY…VNAV), 82-102 (YNLI…LSWF), 109-129 (VRLL…MVVP), 136-156 (AGAV…KSIF), 173-193 (STMM…QIIV), and 209-229 (KIYY…LILL). Basic and acidic residues predominate over residues 261-273 (HTDEHPTHDKEGR). Disordered regions lie at residues 261–280 (HTDE…SGKE) and 290–309 (AAAK…PHEV). Residue Asn-274 is glycosylated (N-linked (GlcNAc...) asparagine). The next 5 membrane-spanning stretches (helical) occupy residues 333 to 353 (MFVA…GIAV), 361 to 381 (WFST…RFSP), 395 to 415 (WIIV…LLHS), 427 to 447 (VMEV…LVLG), and 460 to 480 (FVAG…GTVL).

The protein belongs to the SLC29A/ENT transporter (TC 2.A.57) family.

Its subcellular location is the membrane. It carries out the reaction adenosine(in) + H(+)(in) = adenosine(out) + H(+)(out). It catalyses the reaction uridine(in) + H(+)(in) = uridine(out) + H(+)(out). Its function is as follows. Sodium-independent nucleoside:H(+) symporter; transports adenosine with high affinity and uridine with moderate affinity. Can transport cytidine and thymidine. This is Nucleoside transporter 1.2 from Leishmania donovani.